Reading from the N-terminus, the 145-residue chain is 3-dehydroquinate dehydratase (145 aa).

The active-site Proton acceptor is Tyr24. Positions 76, 82, and 89 each coordinate substrate. The Proton donor role is filled by His102. Substrate-binding positions include 103-104 (LS) and Arg113.

This sequence belongs to the type-II 3-dehydroquinase family. As to quaternary structure, homododecamer.

The enzyme catalyses 3-dehydroquinate = 3-dehydroshikimate + H2O. It functions in the pathway metabolic intermediate biosynthesis; chorismate biosynthesis; chorismate from D-erythrose 4-phosphate and phosphoenolpyruvate: step 3/7. Functionally, catalyzes a trans-dehydration via an enolate intermediate. This chain is 3-dehydroquinate dehydratase, found in Nitrosomonas eutropha (strain DSM 101675 / C91 / Nm57).